Here is a 929-residue protein sequence, read N- to C-terminus: Type I restriction enzyme SauCOLORF180P endonuclease subunit (929 aa).

Residues Gln-254 to Gly-418 enclose the Helicase ATP-binding domain. Thr-268–Thr-274 lines the ATP pocket.

It belongs to the HsdR family. In terms of assembly, the type I restriction/modification system is composed of three polypeptides R, M and S.

It carries out the reaction Endonucleolytic cleavage of DNA to give random double-stranded fragments with terminal 5'-phosphates, ATP is simultaneously hydrolyzed.. Its function is as follows. The restriction (R) subunit of a type I restriction enzyme that recognizes an undetermined sequence and cleaves a random distance away. Subunit R is required for both nuclease and ATPase activities, but not for modification. After locating a non-methylated recognition site, the enzyme complex serves as a molecular motor that translocates DNA in an ATP-dependent manner until a collision occurs that triggers cleavage. This Staphylococcus aureus (strain COL) protein is Type I restriction enzyme SauCOLORF180P endonuclease subunit.